Consider the following 195-residue polypeptide: Glycine-rich protein A3 (195 aa).

Disordered stretches follow at residues 23-103 (AGGG…GVAG) and 159-182 (VMES…GSNL). Positions 47–77 (PAGGGYPPQGYPPAGGGYPPQGYPPAGGGYP) are enriched in gly residues. Positions 82-94 (PPAGHHSGSSAPH) are enriched in low complexity. Positions 163–175 (LSRESTGRARSTD) are enriched in basic and acidic residues.

The polypeptide is Glycine-rich protein A3 (Daucus carota (Wild carrot)).